Consider the following 380-residue polypeptide: 4-hydroxy-3-methylbut-2-en-1-yl diphosphate synthase (flavodoxin) (380 aa).

4 residues coordinate [4Fe-4S] cluster: C280, C283, C315, and E322.

Belongs to the IspG family. It depends on [4Fe-4S] cluster as a cofactor.

The enzyme catalyses (2E)-4-hydroxy-3-methylbut-2-enyl diphosphate + oxidized [flavodoxin] + H2O + 2 H(+) = 2-C-methyl-D-erythritol 2,4-cyclic diphosphate + reduced [flavodoxin]. It participates in isoprenoid biosynthesis; isopentenyl diphosphate biosynthesis via DXP pathway; isopentenyl diphosphate from 1-deoxy-D-xylulose 5-phosphate: step 5/6. Functionally, converts 2C-methyl-D-erythritol 2,4-cyclodiphosphate (ME-2,4cPP) into 1-hydroxy-2-methyl-2-(E)-butenyl 4-diphosphate. The protein is 4-hydroxy-3-methylbut-2-en-1-yl diphosphate synthase (flavodoxin) of Cutibacterium acnes (strain DSM 16379 / KPA171202) (Propionibacterium acnes).